A 501-amino-acid chain; its full sequence is Aspartyl/glutamyl-tRNA(Asn/Gln) amidotransferase subunit B (501 aa).

Residues 272–291 (QETRHYQETDGTTSKGRPKE) form a disordered region.

Belongs to the GatB/GatE family. GatB subfamily. In terms of assembly, heterotrimer of A, B and C subunits.

The catalysed reaction is L-glutamyl-tRNA(Gln) + L-glutamine + ATP + H2O = L-glutaminyl-tRNA(Gln) + L-glutamate + ADP + phosphate + H(+). It catalyses the reaction L-aspartyl-tRNA(Asn) + L-glutamine + ATP + H2O = L-asparaginyl-tRNA(Asn) + L-glutamate + ADP + phosphate + 2 H(+). Allows the formation of correctly charged Asn-tRNA(Asn) or Gln-tRNA(Gln) through the transamidation of misacylated Asp-tRNA(Asn) or Glu-tRNA(Gln) in organisms which lack either or both of asparaginyl-tRNA or glutaminyl-tRNA synthetases. The reaction takes place in the presence of glutamine and ATP through an activated phospho-Asp-tRNA(Asn) or phospho-Glu-tRNA(Gln). The chain is Aspartyl/glutamyl-tRNA(Asn/Gln) amidotransferase subunit B from Corynebacterium efficiens (strain DSM 44549 / YS-314 / AJ 12310 / JCM 11189 / NBRC 100395).